The primary structure comprises 292 residues: Diaminopimelate epimerase (292 aa).

Residues N14 and N78 each coordinate substrate. C87 acts as the Proton donor in catalysis. Substrate contacts are provided by residues 88 to 89, N164, N197, and 221 to 222; these read GN and ER. Residue C230 is the Proton acceptor of the active site. 231–232 provides a ligand contact to substrate; that stretch reads GT.

Belongs to the diaminopimelate epimerase family. Homodimer.

The protein resides in the cytoplasm. The catalysed reaction is (2S,6S)-2,6-diaminopimelate = meso-2,6-diaminopimelate. It participates in amino-acid biosynthesis; L-lysine biosynthesis via DAP pathway; DL-2,6-diaminopimelate from LL-2,6-diaminopimelate: step 1/1. Functionally, catalyzes the stereoinversion of LL-2,6-diaminopimelate (L,L-DAP) to meso-diaminopimelate (meso-DAP), a precursor of L-lysine and an essential component of the bacterial peptidoglycan. In Leifsonia xyli subsp. xyli (strain CTCB07), this protein is Diaminopimelate epimerase.